The primary structure comprises 256 residues: Ubiquinone/menaquinone biosynthesis C-methyltransferase UbiE (256 aa).

Residues Thr79, Asp100, and 128-129 contribute to the S-adenosyl-L-methionine site; that span reads DA.

This sequence belongs to the class I-like SAM-binding methyltransferase superfamily. MenG/UbiE family.

It catalyses the reaction a 2-demethylmenaquinol + S-adenosyl-L-methionine = a menaquinol + S-adenosyl-L-homocysteine + H(+). It carries out the reaction a 2-methoxy-6-(all-trans-polyprenyl)benzene-1,4-diol + S-adenosyl-L-methionine = a 5-methoxy-2-methyl-3-(all-trans-polyprenyl)benzene-1,4-diol + S-adenosyl-L-homocysteine + H(+). It participates in quinol/quinone metabolism; menaquinone biosynthesis; menaquinol from 1,4-dihydroxy-2-naphthoate: step 2/2. Its pathway is cofactor biosynthesis; ubiquinone biosynthesis. Functionally, methyltransferase required for the conversion of demethylmenaquinol (DMKH2) to menaquinol (MKH2) and the conversion of 2-polyprenyl-6-methoxy-1,4-benzoquinol (DDMQH2) to 2-polyprenyl-3-methyl-6-methoxy-1,4-benzoquinol (DMQH2). The polypeptide is Ubiquinone/menaquinone biosynthesis C-methyltransferase UbiE (Ectopseudomonas mendocina (strain ymp) (Pseudomonas mendocina)).